We begin with the raw amino-acid sequence, 445 residues long: C-terminal-binding protein 2 (445 aa).

Arg22 carries the post-translational modification Asymmetric dimethylarginine. NAD(+) contacts are provided by residues Ser106, 186–191 (IGFGRT), Asp210, 243–249 (CNLNEHN), 270–272 (AAR), and Asp296. Arg272 is an active-site residue. Glu301 is an active-site residue. His321 serves as the catalytic Proton donor. Position 321–324 (321–324 (HTAW)) interacts with NAD(+). Residues 414-445 (THNLPTVAHPSQAPSPNQPTKHGDNREHPNEQ) form a disordered region. Position 428 is a phosphoserine (Ser428). The span at 434–445 (KHGDNREHPNEQ) shows a compositional bias: basic and acidic residues.

It belongs to the D-isomer specific 2-hydroxyacid dehydrogenase family. Can form homodimers or heterodimers of CTBP1 and CTBP2. Interacts with HIPK2 and ZNF217. Interacts with PRDM16; represses white adipose tissue (WAT)-specific genes expression. Interacts with PNN, NRIP1 and WIZ. Interacts with MCRIP1. In terms of assembly, (Microbial infection) Interacts with human adenovirus 5 E1A protein; this interaction seems to potentiate viral replication. In terms of tissue distribution, ubiquitous. Highest levels in heart, skeletal muscle, and pancreas.

It is found in the nucleus. The protein localises to the synapse. Its function is as follows. Corepressor targeting diverse transcription regulators. Functions in brown adipose tissue (BAT) differentiation. In terms of biological role, isoform 2 probably acts as a scaffold for specialized synapses. This is C-terminal-binding protein 2 (CTBP2) from Homo sapiens (Human).